A 571-amino-acid polypeptide reads, in one-letter code: DDB1- and CUL4-associated factor 11 homolog (571 aa).

Residues 51 to 75 (RMKPNHSNDSDTDFSSDDEGCPKMT) are disordered. The segment covering 60–69 (SDTDFSSDDE) has biased composition (acidic residues). WD repeat units follow at residues 162 to 201 (RVAT…SKYR), 266 to 305 (RDHC…RIRT), 309 to 349 (AHED…DGDV), 357 to 396 (GHRD…NMSG), 435 to 479 (GHSV…VSRR), and 482 to 521 (GHTA…EGVI).

The protein belongs to the WD repeat LEC14B family.

In terms of biological role, involved in regulation of lifespan. Required for dopaminergic CEP neuron degeneration in response to Mn(2+). Inhibits the skn-1-mediated up-regulation of tatn-1. The sequence is that of DDB1- and CUL4-associated factor 11 homolog from Caenorhabditis elegans.